Reading from the N-terminus, the 493-residue chain is MDASTLFKKVKVKRVLGSLEQQIDDITTDSRTAREGSIFVASVGYTVDSHKFCQNVADQGCKLVVVNKEQSLPANVTQVVVPDTLRVASILAHTLYDYPSHQLVTFGVTGTNGKTSIATMIHLIQRKLQKNSAYLGTNGFQINETKTKGANTTPETVSLTKKIKEAVDAGAESMTLEVSSHGLVLGRLRGVEFDVAIFSNLTQDHLDFHGTMEAYGHAKSLLFSQLGEDLSKEKYVVLNNDDSFSEYLRTVTPYEVFSYGIDEEAQFMAKNIQESLQGVSFDFVTPFGTYPVKSPYVGKFNISNIMAAMIAVWSKGTSLETIIKAVENLEPVEGRLEVLDPSLPIDLIIDYAHTADGMNKLIDAVQPFVKQKLIFLVGMAGERDLTKTPEMGRVACRADYVIFTPDNPANDDPKMLTAELAKGATHQNYIEFDDRAEGIKHAIDIAEPGDTVVLASKGREPYQIMPGHIKVPHRDDLIGLEAAYKKFGGGPVD.

Ser-30 contributes to the UDP-N-acetyl-alpha-D-muramoyl-L-alanyl-D-glutamate binding site. An ATP-binding site is contributed by Gly-110–Ser-116. Residues Asn-151, Thr-152–Thr-153, Ser-179, and Arg-187 each bind UDP-N-acetyl-alpha-D-muramoyl-L-alanyl-D-glutamate. At Lys-219 the chain carries N6-carboxylysine. The L-lysine recognition motif motif lies at Asp-406–Ala-409.

The protein belongs to the MurCDEF family. MurE subfamily. The cofactor is Mg(2+). Post-translationally, carboxylation is probably crucial for Mg(2+) binding and, consequently, for the gamma-phosphate positioning of ATP.

Its subcellular location is the cytoplasm. It catalyses the reaction UDP-N-acetyl-alpha-D-muramoyl-L-alanyl-D-glutamate + L-lysine + ATP = UDP-N-acetyl-alpha-D-muramoyl-L-alanyl-gamma-D-glutamyl-L-lysine + ADP + phosphate + H(+). The protein operates within cell wall biogenesis; peptidoglycan biosynthesis. Functionally, catalyzes the addition of L-lysine to the nucleotide precursor UDP-N-acetylmuramoyl-L-alanyl-D-glutamate (UMAG) in the biosynthesis of bacterial cell-wall peptidoglycan. Cannot use diaminopimelate as substrate. Can accept L-ornithine as substrate, but the efficiency is 400-fold lower than that with L-lysine. Seems to have a role in beta-lactam antibiotic resistance. The protein is UDP-N-acetylmuramoyl-L-alanyl-D-glutamate--L-lysine ligase of Staphylococcus aureus (strain NCTC 8325 / PS 47).